Consider the following 151-residue polypeptide: Lectin-like protein BA14k (151 aa).

A signal peptide spans 1-26; sequence MNIFKQTCVGAFAVIFGATSIAPTMA. The helical transmembrane segment at 83-103 threads the bilayer; the sequence is GWWYPLAAFGAGAIIGGAVSQ.

Belongs to the BA14k family.

The protein resides in the cell membrane. Has immunoglobulin-binding and hemagglutination properties, and can bind to mannose. Essential for virulence. May be involved in LPS biosynthesis or polysaccharide transport. In Brucella anthropi (strain ATCC 49188 / DSM 6882 / CCUG 24695 / JCM 21032 / LMG 3331 / NBRC 15819 / NCTC 12168 / Alc 37) (Ochrobactrum anthropi), this protein is Lectin-like protein BA14k.